A 197-amino-acid chain; its full sequence is Small ribosomal subunit protein uS4A (197 aa).

One can recognise an S4 RNA-binding domain in the interval 107–181; sequence RRLQTQVYKL…VARRNAARKA (75 aa). Residues 160-197 are disordered; sequence PTSPFGGARPGRVARRNAARKAEASGEAADEADEADEE. Lys-180 participates in a covalent cross-link: Glycyl lysine isopeptide (Lys-Gly) (interchain with G-Cter in ubiquitin). Ser-184 bears the Phosphoserine mark. Residues 187–197 are compositionally biased toward acidic residues; that stretch reads AADEADEADEE.

It belongs to the universal ribosomal protein uS4 family. Component of the small ribosomal subunit (SSU). Mature yeast ribosomes consist of a small (40S) and a large (60S) subunit. The 40S small subunit contains 1 molecule of ribosomal RNA (18S rRNA) and 33 different proteins (encoded by 57 genes). The large 60S subunit contains 3 rRNA molecules (25S, 5.8S and 5S rRNA) and 46 different proteins (encoded by 81 genes). Interacts with snoRNA U3. uS11 interacts with MPP10. Component of the ribosomal small subunit (SSU) processome composed of at least 40 protein subunits and snoRNA U3.

The protein localises to the cytoplasm. It is found in the nucleus. Its subcellular location is the nucleolus. Functionally, component of the ribosome, a large ribonucleoprotein complex responsible for the synthesis of proteins in the cell. The small ribosomal subunit (SSU) binds messenger RNAs (mRNAs) and translates the encoded message by selecting cognate aminoacyl-transfer RNA (tRNA) molecules. The large subunit (LSU) contains the ribosomal catalytic site termed the peptidyl transferase center (PTC), which catalyzes the formation of peptide bonds, thereby polymerizing the amino acids delivered by tRNAs into a polypeptide chain. The nascent polypeptides leave the ribosome through a tunnel in the LSU and interact with protein factors that function in enzymatic processing, targeting, and the membrane insertion of nascent chains at the exit of the ribosomal tunnel. uS4 is involved in nucleolar processing of pre-18S ribosomal RNA and ribosome assembly. The protein is Small ribosomal subunit protein uS4A of Saccharomyces cerevisiae (strain ATCC 204508 / S288c) (Baker's yeast).